Reading from the N-terminus, the 207-residue chain is Uracil phosphoribosyltransferase (207 aa).

Residues arginine 77, arginine 102, and 129–137 (DPMVATGGS) each bind 5-phospho-alpha-D-ribose 1-diphosphate. Residues isoleucine 192 and 197 to 199 (GDA) contribute to the uracil site. Aspartate 198 is a binding site for 5-phospho-alpha-D-ribose 1-diphosphate.

The protein belongs to the UPRTase family. Mg(2+) serves as cofactor.

The enzyme catalyses UMP + diphosphate = 5-phospho-alpha-D-ribose 1-diphosphate + uracil. It functions in the pathway pyrimidine metabolism; UMP biosynthesis via salvage pathway; UMP from uracil: step 1/1. Allosterically activated by GTP. Its function is as follows. Catalyzes the conversion of uracil and 5-phospho-alpha-D-ribose 1-diphosphate (PRPP) to UMP and diphosphate. The sequence is that of Uracil phosphoribosyltransferase from Mycobacterium bovis (strain ATCC BAA-935 / AF2122/97).